Consider the following 446-residue polypeptide: Calcium-binding and coiled-coil domain-containing protein 2 (446 aa).

The CLIR signature appears at 133 to 136 (ILVV). The stretch at 137 to 349 (TTQGEVEEIE…RENSRLLSYM (213 aa)) forms a coiled coil. Residues 203–206 (DYWE) carry the LIR-like motif. The interval 362–390 (TSDEGGARQNPGLAYGNPYSGIQESSSPS) is disordered. The interval 371–381 (NPGLAYGNPYS) is interaction with LGALS8. A compositionally biased stretch (polar residues) spans 381–390 (SGIQESSSPS). The segment at 395–446 (KKCPICKADDICDHTLEQQQMQPLCFNCPICDKIFPATEKQIFEDHVFCHSL) is interaction with MYO6. Residues 419-444 (CFNCPICDKIFPATEKQIFEDHVFCH) form a UBZ1-type zinc finger. C422, C425, H440, and H444 together coordinate Zn(2+). S445 bears the Phosphoserine mark.

The protein belongs to the CALCOCO family. Dimer. Part of a complex consisting of CALCOCO2, TAX1BP1 and MYO6. Interacts with MYO6. Interacts with GEMIN4. Interacts with ATG8 family members MAP1LC3A, MAP1LC3B, GABARAP, GABARAPL1 and GABARAPL2. Interacts with ATG8 family member MAP1LC3C. Interacts with LGALS8. Interacts with TOM1; the interaction is indirect and is mediated by MYO6, which acts as a bridge between TOM1 and CALCOCO2. Interacts with AZI2. In terms of assembly, (Microbial infection) Interacts with Lassa virus protein Z. As to quaternary structure, (Microbial infection) Interacts with Mopeia virus protein Z. In terms of processing, (Microbial infection) Cleaved by S.pyogenes SpeB protease; leading to its degradation. Degradation by SpeB prevents autophagy, promoting to S.pyogenes intracellular replication. In terms of tissue distribution, expressed in all tissues tested with highest expression in skeletal muscle and lowest in brain.

Its subcellular location is the cytoplasm. It is found in the perinuclear region. It localises to the cytoskeleton. The protein localises to the cytoplasmic vesicle. The protein resides in the autophagosome membrane. In terms of biological role, xenophagy-specific receptor required for autophagy-mediated intracellular bacteria degradation. Acts as an effector protein of galectin-sensed membrane damage that restricts the proliferation of infecting pathogens such as Salmonella typhimurium upon entry into the cytosol by targeting LGALS8-associated bacteria for autophagy. Initially orchestrates bacteria targeting to autophagosomes and subsequently ensures pathogen degradation by regulating pathogen-containing autophagosome maturation. Bacteria targeting to autophagosomes relies on its interaction with MAP1LC3A, MAP1LC3B and/or GABARAPL2, whereas regulation of pathogen-containing autophagosome maturation requires the interaction with MAP3LC3C. May play a role in ruffle formation and actin cytoskeleton organization and seems to negatively regulate constitutive secretion. The polypeptide is Calcium-binding and coiled-coil domain-containing protein 2 (CALCOCO2) (Homo sapiens (Human)).